The chain runs to 622 residues: 1-deoxy-D-xylulose-5-phosphate synthase (622 aa).

Thiamine diphosphate contacts are provided by residues His-74 and 115–117; that span reads GHS. Asp-146 serves as a coordination point for Mg(2+). Residues 147–148, Asn-177, Phe-285, and Glu-366 each bind thiamine diphosphate; that span reads GA. Asn-177 serves as a coordination point for Mg(2+).

Belongs to the transketolase family. DXPS subfamily. In terms of assembly, homodimer. Mg(2+) serves as cofactor. Thiamine diphosphate is required as a cofactor.

The enzyme catalyses D-glyceraldehyde 3-phosphate + pyruvate + H(+) = 1-deoxy-D-xylulose 5-phosphate + CO2. The protein operates within metabolic intermediate biosynthesis; 1-deoxy-D-xylulose 5-phosphate biosynthesis; 1-deoxy-D-xylulose 5-phosphate from D-glyceraldehyde 3-phosphate and pyruvate: step 1/1. In terms of biological role, catalyzes the acyloin condensation reaction between C atoms 2 and 3 of pyruvate and glyceraldehyde 3-phosphate to yield 1-deoxy-D-xylulose-5-phosphate (DXP). This is 1-deoxy-D-xylulose-5-phosphate synthase from Magnetococcus marinus (strain ATCC BAA-1437 / JCM 17883 / MC-1).